We begin with the raw amino-acid sequence, 67 residues long: DNA-directed RNA polymerase subunit omega (67 aa).

Belongs to the RNA polymerase subunit omega family. As to quaternary structure, the RNAP catalytic core consists of 2 alpha, 1 beta, 1 beta' and 1 omega subunit. When a sigma factor is associated with the core the holoenzyme is formed, which can initiate transcription.

It catalyses the reaction RNA(n) + a ribonucleoside 5'-triphosphate = RNA(n+1) + diphosphate. In terms of biological role, promotes RNA polymerase assembly. Latches the N- and C-terminal regions of the beta' subunit thereby facilitating its interaction with the beta and alpha subunits. The chain is DNA-directed RNA polymerase subunit omega from Listeria monocytogenes serotype 4b (strain F2365).